A 374-amino-acid chain; its full sequence is Ferroptosis suppressor protein 1 (374 aa).

Residue G2 is the site of N-myristoyl glycine attachment. A helical membrane pass occupies residues 13-35; sequence VVIVGGGFAGIAAASQLKSFGIP. Residues 17–21, R53, and V81 each bind 6-hydroxy-FAD; that span reads GGGFA. K167 bears the N6-acetyllysine mark. D285 lines the 6-hydroxy-FAD pocket.

Belongs to the FAD-dependent oxidoreductase family. Requires 6-hydroxy-FAD as cofactor. N-myristoylation at Gly-2 mediates the recruitment to lipid droplets and plasma membrane. Post-translationally, acetylation at Lys-167 prevents AIFM2 ubiquitination and degradation, thereby inhibiting ferroptosis. KAT2B mediates acetylation at Lys-167, while HDAC3 removes it. In terms of processing, ubiquitinated. AIFM2 undergoes 'Lys-29'-ubiquitination and proteasomal degradation, which is inhibited by acetylation at Lys-167.

The protein localises to the lipid droplet. It is found in the cell membrane. Its subcellular location is the cytoplasm. It localises to the mitochondrion membrane. The protein resides in the nucleus. It carries out the reaction ubiquinone-10 + NADH + H(+) = ubiquinol-10 + NAD(+). The enzyme catalyses phylloquinone + NADH + H(+) = phylloquinol + NAD(+). The catalysed reaction is menaquinone-4 + NADH + H(+) = menaquinol-4 + NAD(+). It catalyses the reaction menadione + NADH + H(+) = menadiol + NAD(+). With respect to regulation, the modification by 4-hydroxy-2-nonenal (HNE) adduction in mitochondria results in loss of the oxidoreductase activity and activation of a novel function in mitochondrial oxidative stress signaling. Functionally, a NAD(P)H-dependent oxidoreductase that acts as a key inhibitor of ferroptosis. At the plasma membrane, catalyzes reduction of coenzyme Q/ubiquinone-10 to ubiquinol-10, a lipophilic radical-trapping antioxidant that prevents lipid oxidative damage and consequently ferroptosis. Acts in parallel to GPX4 to suppress phospholipid peroxidation and ferroptosis. This anti-ferroptotic function is independent of cellular glutathione levels. Also acts as a potent radical-trapping antioxidant by mediating warfarin-resistant vitamin K reduction in the canonical vitamin K cycle: catalyzes NAD(P)H-dependent reduction of vitamin K (phylloquinone, menaquinone-4 and menadione) to hydroquinone forms. Hydroquinones act as potent radical-trapping antioxidants inhibitor of phospholipid peroxidation and ferroptosis. May play a role in mitochondrial stress signaling. Upon oxidative stress, associates with the lipid peroxidation end product 4-hydroxy-2-nonenal (HNE) forming a lipid adduct devoid of oxidoreductase activity, which then translocates from mitochondria into the nucleus triggering DNA damage and cell death. The chain is Ferroptosis suppressor protein 1 (aifm2) from Xenopus laevis (African clawed frog).